The primary structure comprises 519 residues: 2-isopropylmalate synthase (519 aa).

Positions 5 to 267 constitute a Pyruvate carboxyltransferase domain; the sequence is VVIFDTTLRD…STNINYKEIY (263 aa). Residues Asp14, His202, His204, and Asn238 each coordinate Mn(2+). The segment at 392–519 is regulatory domain; sequence SLKFFSVQSI…LKILKDFKKK (128 aa).

This sequence belongs to the alpha-IPM synthase/homocitrate synthase family. LeuA type 1 subfamily. As to quaternary structure, homodimer. Mn(2+) is required as a cofactor.

It localises to the cytoplasm. The enzyme catalyses 3-methyl-2-oxobutanoate + acetyl-CoA + H2O = (2S)-2-isopropylmalate + CoA + H(+). The protein operates within amino-acid biosynthesis; L-leucine biosynthesis; L-leucine from 3-methyl-2-oxobutanoate: step 1/4. Its function is as follows. Catalyzes the condensation of the acetyl group of acetyl-CoA with 3-methyl-2-oxobutanoate (2-ketoisovalerate) to form 3-carboxy-3-hydroxy-4-methylpentanoate (2-isopropylmalate). The chain is 2-isopropylmalate synthase from Buchnera aphidicola subsp. Acyrthosiphon pisum (strain APS) (Acyrthosiphon pisum symbiotic bacterium).